Here is a 707-residue protein sequence, read N- to C-terminus: Choline transporter-like protein 4 (707 aa).

Over 1–33 (MGGKQDQDKEAYGKPAKYDPSFRGPIRNRSCTD) the chain is Cytoplasmic. Residues 34–54 (IICCVLFFLFILGYIAVGILA) form a helical membrane-spanning segment. The Extracellular segment spans residues 55–227 (WVYGDPKQVL…KIFEDFAQSW (173 aa)). N-linked (GlcNAc...) asparagine glycans are attached at residues asparagine 68, asparagine 185, and asparagine 196. The chain crosses the membrane as a helical span at residues 228–248 (YWILIALGLALVLSLLFILLL). Topologically, residues 249-250 (RL) are cytoplasmic. A helical transmembrane segment spans residues 251 to 271 (VAGPLVFVLIIGVLGVLAYGI). The Extracellular segment spans residues 272-307 (YHCWEEYRVLRDKGASISQLGFTTNLSAYRNVQETW). Residue asparagine 296 is glycosylated (N-linked (GlcNAc...) asparagine). The helical transmembrane segment at 308–328 (LAALIILAVLEGVLLLMLIFL) threads the bilayer. Residues 329–356 (RQRICIAIALLKEASRAVGYIMSTMFYP) are Cytoplasmic-facing. The chain crosses the membrane as a helical span at residues 357-377 (LVTFALLLVCIAYWAIIALFL). Over 378 to 452 (ATSGQPQYVF…AVLGLFWTIN (75 aa)) the chain is Extracellular. Asparagine 391, asparagine 403, and asparagine 413 each carry an N-linked (GlcNAc...) asparagine glycan. Residues 453–473 (WVLALGQCVLAGAFASFYWAF) traverse the membrane as a helical segment. Over 474–498 (HKPRDIPTFPLGSAFLRTLRYHTGS) the chain is Cytoplasmic. The chain crosses the membrane as a helical span at residues 499–519 (LAFGALILTLVQIARVILEYI). Residues 520 to 557 (DHKLRGAQNPLTRCILCCFKCCLWCLEKFIKFLNRNAY) are Extracellular-facing. The chain crosses the membrane as a helical span at residues 558–578 (IMIAIYGKNFCVSAKNAFMLL). The Cytoplasmic portion of the chain corresponds to 579 to 594 (MRNIVRVVVLDKVTDL). A helical transmembrane segment spans residues 595–615 (LLFFGKLLVVGGVGVLSFFFF). Topologically, residues 616 to 635 (TGRIPSLGKTFENPQLNYYW) are extracellular. A helical membrane pass occupies residues 636–656 (LPIMVSILGAYLIASGFFSVF). Residues 657–707 (GMCVDTLFLCFLEDLERNDGSADRPYYMSKSLLKILGKKNKGTPGDKKRKK) lie on the Cytoplasmic side of the membrane.

The protein belongs to the CTL (choline transporter-like) family. Post-translationally, N-glycosylated; N-glycosylation of Asn-68 and Asn-391 is required for a proper thiamine pyrophosphate uptake.

Its subcellular location is the membrane. It is found in the apical cell membrane. It carries out the reaction choline(out) + n H(+)(in) = choline(in) + n H(+)(out). The catalysed reaction is thiamine diphosphate(out) = thiamine diphosphate(in). In terms of biological role, choline transporter that plays a role in the choline-acetylcholine system and is required to the efferent innervation of hair cells in the olivocochlear bundle for the maintenance of physiological function of outer hair cells and the protection of hair cells from acoustic injury. Also described as a thiamine pyrophosphate transporter in colon, may mediate the absorption of microbiota-generated thiamine pyrophosphate and contribute to host thiamine (vitamin B1) homeostasis. In Bos taurus (Bovine), this protein is Choline transporter-like protein 4.